The following is a 436-amino-acid chain: Tol-Pal system protein TolB (436 aa).

Positions 1 to 19 (MVKCSLIRALMVVAGLVGA) are cleaved as a signal peptide.

It belongs to the TolB family. As to quaternary structure, the Tol-Pal system is composed of five core proteins: the inner membrane proteins TolA, TolQ and TolR, the periplasmic protein TolB and the outer membrane protein Pal. They form a network linking the inner and outer membranes and the peptidoglycan layer.

It localises to the periplasm. In terms of biological role, part of the Tol-Pal system, which plays a role in outer membrane invagination during cell division and is important for maintaining outer membrane integrity. The sequence is that of Tol-Pal system protein TolB from Rhizobium etli (strain ATCC 51251 / DSM 11541 / JCM 21823 / NBRC 15573 / CFN 42).